Consider the following 474-residue polypeptide: Vacuolar basic amino acid transporter 2 (474 aa).

Residues 1 to 33 (MSISNWITTAYLITSTSFQPLYGSFSDALGRRN) lie on the Cytoplasmic side of the membrane. The helical transmembrane segment at 34 to 54 (CLFFANGAFTIGCLACGFSKN) threads the bilayer. Over 55-62 (IYMLSFMR) the chain is Vacuolar. The chain crosses the membrane as a helical span at residues 63–85 (ALTGIGGGGLITLSTIVNSDVIP). The Cytoplasmic segment spans residues 86–97 (SSKRGIFQAFQN). A helical transmembrane segment spans residues 98–118 (LLLGFGAICGASFGGTIASSI). The Vacuolar segment spans residues 119–121 (GWR). The helical transmembrane segment at 122-142 (WCFLIQVPISVISSILMNYYV) threads the bilayer. Topologically, residues 143–167 (PNQKEYNRQNSSIFQNPGKILRDID) are cytoplasmic. Residues 168 to 188 (VMGSILIITGLTLQLLYLSLG) form a helical membrane-spanning segment. The Vacuolar segment spans residues 189–196 (CSTSKLSW). A helical transmembrane segment spans residues 197 to 217 (TSPSVLLLLVGSVIILLLFIL). Topologically, residues 218-238 (HERKTSARAIIPMELVNSSYS) are cytoplasmic. Residues 239–259 (VVVLSISILVGFASYAYLFTL) form a helical membrane-spanning segment. The Vacuolar portion of the chain corresponds to 260–273 (PLFFQIVLGDSTAK). A helical transmembrane segment spans residues 274–294 (AGLRLTIPSLFTPVGSLITGF). At 295–303 (SMSKYNCLR) the chain is on the cytoplasmic side. Residues 304-324 (LLLYIGISLMFLGNFLFLFIE) form a helical membrane-spanning segment. The Vacuolar portion of the chain corresponds to 325–331 (KTSPNWL). Residues 332–352 (IGLFLIPANLGQGITFPTTLF) traverse the membrane as a helical segment. Topologically, residues 353 to 375 (TFIFMFSKSDQATATSTLYLFRS) are cytoplasmic. A helical membrane pass occupies residues 376-396 (IGSVWGVAISAGVIQLSFAGL). Topologically, residues 397–447 (LRSNLKGLLDENKIKKLIVQLSANSSYIGSLHGEVKNTVIKSFDEATKRAH) are vacuolar. Residue Asn-420 is glycosylated (N-linked (GlcNAc...) asparagine). A helical transmembrane segment spans residues 448–468 (LMSTLLSSLALILCILKDNLA). Over 469-474 (KPKTRR) the chain is Cytoplasmic.

Belongs to the major facilitator superfamily.

It localises to the vacuole membrane. Functionally, transporter required for vacuolar uptake of histidine, arginine and lysine and to a lesser extent tyrosine. The polypeptide is Vacuolar basic amino acid transporter 2 (VBA2) (Saccharomyces cerevisiae (strain ATCC 204508 / S288c) (Baker's yeast)).